Consider the following 96-residue polypeptide: Large ribosomal subunit protein bL27 (96 aa).

Positions 1–9 are excised as a propeptide; sequence MLRLDLQFF.

It belongs to the bacterial ribosomal protein bL27 family. Post-translationally, the N-terminus is cleaved by ribosomal processing cysteine protease Prp.

The protein is Large ribosomal subunit protein bL27 of Anoxybacillus flavithermus (strain DSM 21510 / WK1).